A 235-amino-acid chain; its full sequence is MERRKKQNEGLLSVYPPPPWYSRYFTDENVAKVKDLQSSDNSQLLEAPLKYLTPPSPPEAGAYHNFGDVWQVNDKLATLEDLGITQVYDGAAIRGEGQESGARVLELKKLTKSLLLAFVELTGIMGVSPEQFPAKFEHVRVLLINIHHILNEYRPHQARESLVTLMQQQINDKKQHVENIRQSCDKVRDTIRVLSKQFDQVDEFEETGGVTTEEVKYVSGKDKDLLVVKMAEQVL.

The protein belongs to the Mediator complex subunit 7 family. In terms of assembly, component of the Mediator complex.

The protein resides in the nucleus. In terms of biological role, component of the Mediator complex, a coactivator involved in the regulated transcription of nearly all RNA polymerase II-dependent genes. Mediator functions as a bridge to convey information from gene-specific regulatory proteins to the basal RNA polymerase II transcription machinery. Mediator is recruited to promoters by direct interactions with regulatory proteins and serves as a scaffold for the assembly of a functional preinitiation complex with RNA polymerase II and the general transcription factors. In Yarrowia lipolytica (strain CLIB 122 / E 150) (Yeast), this protein is Mediator of RNA polymerase II transcription subunit 7 (MED7).